The chain runs to 604 residues: UvrABC system protein C (604 aa).

Positions 17 to 95 (SQPGVYRMLN…IKSLAPRYNI (79 aa)) constitute a GIY-YIG domain. The region spanning 204–239 (DEVLKTIEQKMFEASDRQAYEQAVLFRDQMQALRMI) is the UVR domain.

This sequence belongs to the UvrC family. Interacts with UvrB in an incision complex.

The protein resides in the cytoplasm. The UvrABC repair system catalyzes the recognition and processing of DNA lesions. UvrC both incises the 5' and 3' sides of the lesion. The N-terminal half is responsible for the 3' incision and the C-terminal half is responsible for the 5' incision. This is UvrABC system protein C from Nitrosomonas eutropha (strain DSM 101675 / C91 / Nm57).